A 257-amino-acid chain; its full sequence is MLIIDIGNTNIKFGICINNQIIQTLRISSQPRRTADEYFFFLNTIINQLNINNFTITHIIISSVVPSITKPMIELSTHYFNITPTIINNQHADICNIKIDLNDKLLGSDRLASIIGAVTLYPNKNLLVISMGTATVFNLISKERSIYGQVITPGAHIMAQSMRQHTALLPEISQIKVNKVVHNTLFYAIEAGVYWGYIAMVEGIVKQILHEENKDLHIVATGGNSILFIDHKNFIKNIDPDLTMKGMIYLHNMLFNK.

Position 5-12 (5-12 (DIGNTNIK)) interacts with ATP. 107–110 (GSDR) serves as a coordination point for substrate. Residue aspartate 109 is the Proton acceptor of the active site. An ATP-binding site is contributed by threonine 133.

This sequence belongs to the type III pantothenate kinase family. As to quaternary structure, homodimer. NH4(+) is required as a cofactor. Requires K(+) as cofactor.

The protein localises to the cytoplasm. It carries out the reaction (R)-pantothenate + ATP = (R)-4'-phosphopantothenate + ADP + H(+). Its pathway is cofactor biosynthesis; coenzyme A biosynthesis; CoA from (R)-pantothenate: step 1/5. In terms of biological role, catalyzes the phosphorylation of pantothenate (Pan), the first step in CoA biosynthesis. This Ehrlichia ruminantium (strain Welgevonden) protein is Type III pantothenate kinase.